A 221-amino-acid chain; its full sequence is Carbonic anhydrase (221 aa).

Zn(2+) is bound by residues cysteine 38, aspartate 40, histidine 99, and cysteine 102.

This sequence belongs to the beta-class carbonic anhydrase family. Requires Zn(2+) as cofactor.

The catalysed reaction is hydrogencarbonate + H(+) = CO2 + H2O. The sequence is that of Carbonic anhydrase (cynT) from Helicobacter pylori (strain J99 / ATCC 700824) (Campylobacter pylori J99).